The chain runs to 171 residues: S-ribosylhomocysteine lyase (171 aa).

The Fe cation site is built by His54, His58, and Cys128.

Belongs to the LuxS family. As to quaternary structure, homodimer. Requires Fe cation as cofactor.

The catalysed reaction is S-(5-deoxy-D-ribos-5-yl)-L-homocysteine = (S)-4,5-dihydroxypentane-2,3-dione + L-homocysteine. Involved in the synthesis of autoinducer 2 (AI-2) which is secreted by bacteria and is used to communicate both the cell density and the metabolic potential of the environment. The regulation of gene expression in response to changes in cell density is called quorum sensing. Catalyzes the transformation of S-ribosylhomocysteine (RHC) to homocysteine (HC) and 4,5-dihydroxy-2,3-pentadione (DPD). The protein is S-ribosylhomocysteine lyase of Proteus mirabilis (strain HI4320).